The following is a 212-amino-acid chain: Thiamine-phosphate synthase (212 aa).

4-amino-2-methyl-5-(diphosphooxymethyl)pyrimidine is bound by residues 39–43 (QLREK) and asparagine 71. Aspartate 72 and aspartate 91 together coordinate Mg(2+). Position 110 (serine 110) interacts with 4-amino-2-methyl-5-(diphosphooxymethyl)pyrimidine. 137–139 (TPT) contributes to the 2-[(2R,5Z)-2-carboxy-4-methylthiazol-5(2H)-ylidene]ethyl phosphate binding site. Lysine 140 provides a ligand contact to 4-amino-2-methyl-5-(diphosphooxymethyl)pyrimidine. Glycine 168 contributes to the 2-[(2R,5Z)-2-carboxy-4-methylthiazol-5(2H)-ylidene]ethyl phosphate binding site.

The protein belongs to the thiamine-phosphate synthase family. It depends on Mg(2+) as a cofactor.

The enzyme catalyses 2-[(2R,5Z)-2-carboxy-4-methylthiazol-5(2H)-ylidene]ethyl phosphate + 4-amino-2-methyl-5-(diphosphooxymethyl)pyrimidine + 2 H(+) = thiamine phosphate + CO2 + diphosphate. The catalysed reaction is 2-(2-carboxy-4-methylthiazol-5-yl)ethyl phosphate + 4-amino-2-methyl-5-(diphosphooxymethyl)pyrimidine + 2 H(+) = thiamine phosphate + CO2 + diphosphate. It catalyses the reaction 4-methyl-5-(2-phosphooxyethyl)-thiazole + 4-amino-2-methyl-5-(diphosphooxymethyl)pyrimidine + H(+) = thiamine phosphate + diphosphate. It functions in the pathway cofactor biosynthesis; thiamine diphosphate biosynthesis; thiamine phosphate from 4-amino-2-methyl-5-diphosphomethylpyrimidine and 4-methyl-5-(2-phosphoethyl)-thiazole: step 1/1. In terms of biological role, condenses 4-methyl-5-(beta-hydroxyethyl)thiazole monophosphate (THZ-P) and 2-methyl-4-amino-5-hydroxymethyl pyrimidine pyrophosphate (HMP-PP) to form thiamine monophosphate (TMP). The chain is Thiamine-phosphate synthase from Acidothermus cellulolyticus (strain ATCC 43068 / DSM 8971 / 11B).